Consider the following 128-residue polypeptide: MPMAPRVLLLCLLGLAVTEGHSPETAIPGCHLHPFNVTVRSDRLGTCQGSHVAQACVGHCESSAFPSRYSVLVASGYRHNITSSSQCCTISSLRKVRVWLQCVGNQRGELEIFTARACQCDMCRFSRY.

The first 20 residues, 1–20 (MPMAPRVLLLCLLGLAVTEG), serve as a signal peptide directing secretion. Disulfide bonds link Cys-30-Cys-88, Cys-47-Cys-102, Cys-56-Cys-118, and Cys-60-Cys-120. N-linked (GlcNAc...) asparagine glycosylation is found at Asn-36 and Asn-80.

Belongs to the glycoprotein hormones subunit alpha family. As to quaternary structure, heterodimer with GPHB5; this heterodimer interacts with thyroid-stimulating hormone receptor (TSHR), and hence stimulates cAMP production.

The protein resides in the secreted. In terms of biological role, functions as a heterodimeric glycoprotein hormone with GPHB5 able to bind and activate the thyroid-stimulating hormone receptor (TSHR), leading to increased cAMP production. Plays a central role in controlling thyroid cell metabolism. This is Glycoprotein hormone alpha-2 (Gpha2) from Mus musculus (Mouse).